We begin with the raw amino-acid sequence, 466 residues long: Signal recognition particle 54 kDa protein (466 aa).

Residues 104-111 (GLQGSGKT), 184-188 (DTAGR), and 242-245 (TKLD) each bind GTP. The disordered stretch occupies residues 444-466 (MQQGGGGGGGGGGGLGGMGPFGD). Residues 446–466 (QGGGGGGGGGGGLGGMGPFGD) are compositionally biased toward gly residues.

The protein belongs to the GTP-binding SRP family. SRP54 subfamily. Part of the signal recognition particle protein translocation system, which is composed of SRP and FtsY. Archaeal SRP consists of a 7S RNA molecule of 300 nucleotides and two protein subunits: SRP54 and SRP19.

The protein resides in the cytoplasm. It carries out the reaction GTP + H2O = GDP + phosphate + H(+). Involved in targeting and insertion of nascent membrane proteins into the cytoplasmic membrane. Binds to the hydrophobic signal sequence of the ribosome-nascent chain (RNC) as it emerges from the ribosomes. The SRP-RNC complex is then targeted to the cytoplasmic membrane where it interacts with the SRP receptor FtsY. The polypeptide is Signal recognition particle 54 kDa protein (Natronomonas pharaonis (strain ATCC 35678 / DSM 2160 / CIP 103997 / JCM 8858 / NBRC 14720 / NCIMB 2260 / Gabara) (Halobacterium pharaonis)).